The following is a 221-amino-acid chain: DNA repair and recombination protein RadB (221 aa).

The protein belongs to the eukaryotic RecA-like protein family. RadB subfamily.

In terms of biological role, involved in DNA repair and in homologous recombination. May regulate the cleavage reactions of the branch-structured DNA. Has a very weak ATPase activity that is not stimulated by DNA. Binds DNA but does not promote DNA strands exchange. The polypeptide is DNA repair and recombination protein RadB (Thermococcus gammatolerans (strain DSM 15229 / JCM 11827 / EJ3)).